A 629-amino-acid polypeptide reads, in one-letter code: tRNA uridine 5-carboxymethylaminomethyl modification enzyme MnmG (629 aa).

Residues 13–18 (GGGHAG), V125, and S180 each bind FAD. Position 273–287 (273–287 (GPRYCPSIEDKVMRF)) interacts with NAD(+). Residue Q370 participates in FAD binding.

It belongs to the MnmG family. In terms of assembly, homodimer. Heterotetramer of two MnmE and two MnmG subunits. The cofactor is FAD.

It localises to the cytoplasm. Its function is as follows. NAD-binding protein involved in the addition of a carboxymethylaminomethyl (cmnm) group at the wobble position (U34) of certain tRNAs, forming tRNA-cmnm(5)s(2)U34. The sequence is that of tRNA uridine 5-carboxymethylaminomethyl modification enzyme MnmG from Escherichia coli O45:K1 (strain S88 / ExPEC).